Here is a 397-residue protein sequence, read N- to C-terminus: Serpin B10 (397 aa).

Positions 74–77 (KKRK) match the Nuclear localization signal motif.

Belongs to the serpin family. Ov-serpin subfamily.

It is found in the nucleus. The protein localises to the cytoplasm. Its function is as follows. Protease inhibitor that may play a role in the regulation of protease activities during hematopoiesis and apoptosis induced by TNF. May regulate protease activities in the cytoplasm and in the nucleus. This chain is Serpin B10 (SERPINB10), found in Otolemur garnettii (Small-eared galago).